The following is a 192-amino-acid chain: MSLIQRLRAVVAGDDYLDSDFDELDDYSRDEFDAGNRNPREYTSGLASFSGSNPFDVSGGSSSNVIGMPGISTATAEVNLMEPRSFDEMPKAIQALRERKTVILNLTMMEPDQAQRAVDFVAGGTFAIDGHQERVGESIFLFAPSCVSVTNSFQEEPAPSNVTTTTQQSEETISESVTAPEPAWGTPVASAI.

Residues 154 to 192 (QEEPAPSNVTTTTQQSEETISESVTAPEPAWGTPVASAI) form a disordered region. Positions 162 to 178 (VTTTTQQSEETISESVT) are enriched in low complexity.

The protein belongs to the SepF family. As to quaternary structure, homodimer. Interacts with FtsZ.

It is found in the cytoplasm. Functionally, cell division protein that is part of the divisome complex and is recruited early to the Z-ring. Probably stimulates Z-ring formation, perhaps through the cross-linking of FtsZ protofilaments. Its function overlaps with FtsA. This chain is Cell division protein SepF, found in Prochlorococcus marinus (strain MIT 9211).